We begin with the raw amino-acid sequence, 621 residues long: Putative 5'-3' exonuclease R528 (621 aa).

The protein belongs to the 5'-3' exonuclease family.

Its subcellular location is the virion. This Acanthamoeba polyphaga mimivirus (APMV) protein is Putative 5'-3' exonuclease R528.